The following is a 965-amino-acid chain: Sarcosine oxidase subunit alpha (965 aa).

NAD(+) contacts are provided by A139, D158, E159, R160, T166, V205, A418, L423, and T425. (6R)-5,10-methylene-5,6,7,8-tetrahydrofolate contacts are provided by T692 and E784.

This sequence belongs to the GcvT family. Heterotetramer composed of subunits alpha (SoxA), beta (SoxB), gamma (SoxG) and delta (SoxD). Requires NAD(+) as cofactor.

It is found in the cytoplasm. It carries out the reaction sarcosine + (6S)-5,6,7,8-tetrahydrofolate + O2 = (6R)-5,10-methylene-5,6,7,8-tetrahydrofolate + glycine + H2O2. It catalyses the reaction sarcosine + O2 + H2O = formaldehyde + glycine + H2O2. With respect to regulation, inhibited by Zn(2+), Cu(2+), Cd(2+), Hg(2+), Ag(+), p-chloromercuribenzoate (p-CMB), iodoacetamide, N-ethylmaleimide, CN(-), o-phenanthroline and sodium lauryl sulfate. Functionally, in the presence of tetrahydrofolate, catalyzes the oxidative demethylation of sarcosine to yield glycine, 5,10-methylenetetrahydrofolate and hydrogen peroxide. In the absence of tetrahydrofolate, catalyzes the oxidative demethylation of sarcosine to yield glycine, formaldehyde and hydrogen peroxide. Can also use N-methyl-L-alanine and N-ethyl-L-glycine. Is very specific for oxygen as an acceptor. In Corynebacterium sp. (strain U-96), this protein is Sarcosine oxidase subunit alpha.